Reading from the N-terminus, the 251-residue chain is Probable transcriptional regulatory protein cbdbA400 (251 aa).

It belongs to the TACO1 family.

The protein resides in the cytoplasm. The polypeptide is Probable transcriptional regulatory protein cbdbA400 (Dehalococcoides mccartyi (strain CBDB1)).